The primary structure comprises 256 residues: L-tyrosine degradation gene cluster protein hmgX (256 aa).

It belongs to the TTC36 family.

Its subcellular location is the cytoplasm. Functionally, part of the L-tyrosine degradation gene cluster that mediates the biosynthesis of the brownish pigment pyomelanin as an alternative melanin. The 4-hydroxyphenylpyruvate dioxygenase hppD catalyzes the conversion of 4-hydroxyphenylpyruvate to homogentisic acid (HGA). The protein hmgX is crucial for this conversion and thus, probably functions as an accessory factor to mediate specific activity of hppD. The homogentisate 1,2-dioxygenase hmgA is then involved in the cleavage of the aromatic ring of HGA and its conversion to 4-maleylacetoacetate. When hmgA activity is lowered by the cell wall integrity (CWI) signaling pathway, HGA accumulates and leads to the production of pyomelanin through benzoquinone acetic acid after oxidation and polymerization. On the opposite, in non-stress conditions, both hppD and hmgA activities are balanced and HGA is degraded into 4-maleylacetoacetate. 4-maleylacetoacetate is further converted to 4-fumarylacetoacetate by the maleylacetoacetate isomerase maiA, which is degraded into fumarate and acetoacetate by the fumarylacetoacetase fahA. This chain is L-tyrosine degradation gene cluster protein hmgX, found in Aspergillus fumigatus (strain ATCC MYA-4609 / CBS 101355 / FGSC A1100 / Af293) (Neosartorya fumigata).